The primary structure comprises 234 residues: Phosphoribosylaminoimidazole-succinocarboxamide synthase (234 aa).

It belongs to the SAICAR synthetase family.

It catalyses the reaction 5-amino-1-(5-phospho-D-ribosyl)imidazole-4-carboxylate + L-aspartate + ATP = (2S)-2-[5-amino-1-(5-phospho-beta-D-ribosyl)imidazole-4-carboxamido]succinate + ADP + phosphate + 2 H(+). It functions in the pathway purine metabolism; IMP biosynthesis via de novo pathway; 5-amino-1-(5-phospho-D-ribosyl)imidazole-4-carboxamide from 5-amino-1-(5-phospho-D-ribosyl)imidazole-4-carboxylate: step 1/2. This Pyrococcus furiosus (strain ATCC 43587 / DSM 3638 / JCM 8422 / Vc1) protein is Phosphoribosylaminoimidazole-succinocarboxamide synthase.